The sequence spans 242 residues: ATP synthase subunit a (242 aa).

Transmembrane regions (helical) follow at residues 29–49 (SAAY…LAFS), 84–104 (FVPV…FGMI), 114–134 (IIIT…VGFV), 140–160 (FLSL…MIII), 189–209 (VIAS…IPLM), and 210–230 (VILI…FTIL).

Belongs to the ATPase A chain family. As to quaternary structure, F-type ATPases have 2 components, CF(1) - the catalytic core - and CF(0) - the membrane proton channel. CF(1) has five subunits: alpha(3), beta(3), gamma(1), delta(1), epsilon(1). CF(0) has three main subunits: a(1), b(2) and c(9-12). The alpha and beta chains form an alternating ring which encloses part of the gamma chain. CF(1) is attached to CF(0) by a central stalk formed by the gamma and epsilon chains, while a peripheral stalk is formed by the delta and b chains.

It localises to the cell inner membrane. In terms of biological role, key component of the proton channel; it plays a direct role in the translocation of protons across the membrane. In Rickettsia bellii (strain OSU 85-389), this protein is ATP synthase subunit a.